The chain runs to 570 residues: Putative ABC transporter ATP-binding protein SAV2684 (570 aa).

2 ABC transporter domains span residues 6-247 and 304-537; these read ISFK…GIRE and LELN…ASLR. Residues 40–47 and 338–345 contribute to the ATP site; these read GASGSGKS and GHNGAGKS.

The protein belongs to the ABC transporter superfamily.

The protein resides in the cell membrane. In terms of biological role, probably part of an ABC transporter complex. Responsible for energy coupling to the transport system. The chain is Putative ABC transporter ATP-binding protein SAV2684 from Staphylococcus aureus (strain Mu50 / ATCC 700699).